A 339-amino-acid chain; its full sequence is Uroporphyrinogen decarboxylase (339 aa).

Substrate-binding positions include 21–25 (RQAGR), D71, Y147, S202, and H315.

Belongs to the uroporphyrinogen decarboxylase family. Homodimer.

Its subcellular location is the cytoplasm. It catalyses the reaction uroporphyrinogen III + 4 H(+) = coproporphyrinogen III + 4 CO2. It functions in the pathway porphyrin-containing compound metabolism; protoporphyrin-IX biosynthesis; coproporphyrinogen-III from 5-aminolevulinate: step 4/4. Its function is as follows. Catalyzes the decarboxylation of four acetate groups of uroporphyrinogen-III to yield coproporphyrinogen-III. The protein is Uroporphyrinogen decarboxylase of Helicobacter pylori (strain G27).